A 201-amino-acid polypeptide reads, in one-letter code: ATP-dependent Clp protease proteolytic subunit (201 aa).

Serine 101 functions as the Nucleophile in the catalytic mechanism. The active site involves histidine 126.

It belongs to the peptidase S14 family. In terms of assembly, fourteen ClpP subunits assemble into 2 heptameric rings which stack back to back to give a disk-like structure with a central cavity, resembling the structure of eukaryotic proteasomes.

It is found in the cytoplasm. The enzyme catalyses Hydrolysis of proteins to small peptides in the presence of ATP and magnesium. alpha-casein is the usual test substrate. In the absence of ATP, only oligopeptides shorter than five residues are hydrolyzed (such as succinyl-Leu-Tyr-|-NHMec, and Leu-Tyr-Leu-|-Tyr-Trp, in which cleavage of the -Tyr-|-Leu- and -Tyr-|-Trp bonds also occurs).. Cleaves peptides in various proteins in a process that requires ATP hydrolysis. Has a chymotrypsin-like activity. Plays a major role in the degradation of misfolded proteins. The protein is ATP-dependent Clp protease proteolytic subunit of Francisella philomiragia subsp. philomiragia (strain ATCC 25017 / CCUG 19701 / FSC 153 / O#319-036).